We begin with the raw amino-acid sequence, 371 residues long: DNA replication and repair protein RecF (371 aa).

30-37 (GENAQGKT) is an ATP binding site.

Belongs to the RecF family.

Its subcellular location is the cytoplasm. Its function is as follows. The RecF protein is involved in DNA metabolism; it is required for DNA replication and normal SOS inducibility. RecF binds preferentially to single-stranded, linear DNA. It also seems to bind ATP. The protein is DNA replication and repair protein RecF of Lysinibacillus sphaericus (strain C3-41).